Reading from the N-terminus, the 72-residue chain is Translation initiation factor IF-1 (72 aa).

The region spanning 1 to 72 is the S1-like domain; it reads MAKDDVIQMQ…SRARIVFRAK (72 aa).

It belongs to the IF-1 family. As to quaternary structure, component of the 30S ribosomal translation pre-initiation complex which assembles on the 30S ribosome in the order IF-2 and IF-3, IF-1 and N-formylmethionyl-tRNA(fMet); mRNA recruitment can occur at any time during PIC assembly.

Its subcellular location is the cytoplasm. One of the essential components for the initiation of protein synthesis. Stabilizes the binding of IF-2 and IF-3 on the 30S subunit to which N-formylmethionyl-tRNA(fMet) subsequently binds. Helps modulate mRNA selection, yielding the 30S pre-initiation complex (PIC). Upon addition of the 50S ribosomal subunit IF-1, IF-2 and IF-3 are released leaving the mature 70S translation initiation complex. This chain is Translation initiation factor IF-1, found in Burkholderia thailandensis (strain ATCC 700388 / DSM 13276 / CCUG 48851 / CIP 106301 / E264).